Consider the following 458-residue polypeptide: UDP-N-acetylmuramoylalanine--D-glutamate ligase (458 aa).

ATP is bound at residue 124–130 (GSDGKTT).

It belongs to the MurCDEF family.

Its subcellular location is the cytoplasm. The enzyme catalyses UDP-N-acetyl-alpha-D-muramoyl-L-alanine + D-glutamate + ATP = UDP-N-acetyl-alpha-D-muramoyl-L-alanyl-D-glutamate + ADP + phosphate + H(+). It participates in cell wall biogenesis; peptidoglycan biosynthesis. Its function is as follows. Cell wall formation. Catalyzes the addition of glutamate to the nucleotide precursor UDP-N-acetylmuramoyl-L-alanine (UMA). The chain is UDP-N-acetylmuramoylalanine--D-glutamate ligase from Clostridium botulinum (strain 657 / Type Ba4).